The following is a 759-amino-acid chain: LPS-assembly protein LptD (759 aa).

The N-terminal stretch at Met1–Ala22 is a signal peptide.

The protein belongs to the LptD family. In terms of assembly, component of the lipopolysaccharide transport and assembly complex. Interacts with LptE and LptA.

It localises to the cell outer membrane. Its function is as follows. Together with LptE, is involved in the assembly of lipopolysaccharide (LPS) at the surface of the outer membrane. The protein is LPS-assembly protein LptD of Alcanivorax borkumensis (strain ATCC 700651 / DSM 11573 / NCIMB 13689 / SK2).